The chain runs to 126 residues: Phosphoribosyl-AMP cyclohydrolase (126 aa).

Mg(2+) is bound at residue Asp-82. A Zn(2+)-binding site is contributed by Cys-83. Mg(2+) is bound by residues Asp-84 and Asp-86. Residues Cys-99 and Cys-106 each contribute to the Zn(2+) site.

This sequence belongs to the PRA-CH family. As to quaternary structure, homodimer. Mg(2+) serves as cofactor. It depends on Zn(2+) as a cofactor.

It is found in the cytoplasm. The catalysed reaction is 1-(5-phospho-beta-D-ribosyl)-5'-AMP + H2O = 1-(5-phospho-beta-D-ribosyl)-5-[(5-phospho-beta-D-ribosylamino)methylideneamino]imidazole-4-carboxamide. Its pathway is amino-acid biosynthesis; L-histidine biosynthesis; L-histidine from 5-phospho-alpha-D-ribose 1-diphosphate: step 3/9. Catalyzes the hydrolysis of the adenine ring of phosphoribosyl-AMP. In Sphingopyxis alaskensis (strain DSM 13593 / LMG 18877 / RB2256) (Sphingomonas alaskensis), this protein is Phosphoribosyl-AMP cyclohydrolase.